We begin with the raw amino-acid sequence, 77 residues long: Conotoxin Vc6b (77 aa).

The signal sequence occupies residues 1–22 (MKLTCMMIVAVLFLTANTFVTA). A propeptide spanning residues 23 to 47 (DDSGNGMENLFPKAGHEMENLEASN) is cleaved from the precursor. Disulfide bonds link C52–C66, C59–C72, and C67–C76.

In terms of tissue distribution, expressed by the venom duct.

It localises to the secreted. The chain is Conotoxin Vc6b from Conus victoriae (Queen Victoria cone).